Reading from the N-terminus, the 141-residue chain is Hemoglobin subunit alpha (141 aa).

Residues 1–141 (VLSPADKTNV…VSTVLTSKYR (141 aa)) enclose the Globin domain. S3 is subject to Phosphoserine. Position 7 is an N6-succinyllysine (K7). Phosphothreonine is present on T8. N6-succinyllysine is present on K11. Position 16 is an N6-acetyllysine; alternate (K16). Residue K16 is modified to N6-succinyllysine; alternate. At Y24 the chain carries Phosphotyrosine. S35 bears the Phosphoserine mark. K40 is modified (N6-succinyllysine). A Phosphoserine modification is found at S49. Position 58 (H58) interacts with O2. H87 contributes to the heme b binding site. At S102 the chain carries Phosphoserine. The residue at position 108 (T108) is a Phosphothreonine. S124 and S131 each carry phosphoserine. A phosphothreonine mark is found at T134 and T137. A Phosphoserine modification is found at S138.

The protein belongs to the globin family. As to quaternary structure, heterotetramer of two alpha chains and two beta chains. In terms of tissue distribution, red blood cells.

Involved in oxygen transport from the lung to the various peripheral tissues. Functionally, hemopressin acts as an antagonist peptide of the cannabinoid receptor CNR1. Hemopressin-binding efficiently blocks cannabinoid receptor CNR1 and subsequent signaling. The chain is Hemoglobin subunit alpha (HBA) from Cebus capucinus (White-faced sapajou).